The following is a 253-amino-acid chain: uncharacterized protein (253 aa).

Residue 6 to 30 (IITASDSGIGKECALLLAQQGFDIG) coordinates NADP(+). S140 contributes to the substrate binding site. Y153 (proton acceptor) is an active-site residue.

The protein belongs to the short-chain dehydrogenases/reductases (SDR) family.

This is an uncharacterized protein from Escherichia coli (strain K12).